The sequence spans 116 residues: Putative iron-sulfur cluster insertion protein ErpA (116 aa).

Iron-sulfur cluster-binding residues include cysteine 44, cysteine 108, and cysteine 110.

The protein belongs to the HesB/IscA family. As to quaternary structure, homodimer. Iron-sulfur cluster serves as cofactor.

In terms of biological role, required for insertion of 4Fe-4S clusters. This Janthinobacterium sp. (strain Marseille) (Minibacterium massiliensis) protein is Putative iron-sulfur cluster insertion protein ErpA.